A 515-amino-acid chain; its full sequence is Carboxyl-terminal-processing peptidase 2, chloroplastic (515 aa).

The PDZ domain occupies 198–286 (FKSLRSGTQG…SAVELAIRSG (89 aa)). Catalysis depends on charge relay system residues Ser417 and Lys442.

It belongs to the peptidase S41A family.

It localises to the plastid. The protein resides in the chloroplast thylakoid lumen. The catalysed reaction is The enzyme shows specific recognition of a C-terminal tripeptide, Xaa-Yaa-Zaa, in which Xaa is preferably Ala or Leu, Yaa is preferably Ala or Tyr, and Zaa is preferably Ala, but then cleaves at a variable distance from the C-terminus. A typical cleavage is -Ala-Ala-|-Arg-Ala-Ala-Lys-Glu-Asn-Tyr-Ala-Leu-Ala-Ala.. Protease involved in the C-terminal processing of the chloroplastic D1 protein of photosystem II. This proteolytic processing is necessary to allow the light-driven assembly of the tetranuclear manganese cluster, which is responsible for photosynthetic water oxidation. The polypeptide is Carboxyl-terminal-processing peptidase 2, chloroplastic (CTPA2) (Arabidopsis thaliana (Mouse-ear cress)).